The primary structure comprises 65 residues: Large ribosomal subunit protein bL35 (65 aa).

The protein belongs to the bacterial ribosomal protein bL35 family.

This Aeromonas salmonicida (strain A449) protein is Large ribosomal subunit protein bL35.